We begin with the raw amino-acid sequence, 323 residues long: Breast cancer metastasis-suppressor 1-like protein (323 aa).

Residues 1–15 are compositionally biased toward basic and acidic residues; it reads MPVHSREKKENNHDE. A disordered region spans residues 1–56; that stretch reads MPVHSREKKENNHDEMEVDYGENEGSTSEEEETESSSVSEEGDSSEMDDEDCERRR. The span at 16–51 shows a compositional bias: acidic residues; it reads MEVDYGENEGSTSEEEETESSSVSEEGDSSEMDDED. 2 coiled-coil regions span residues 50–82 and 147–178; these read EDCE…KERL and EKLL…ITSE.

It belongs to the BRMS1 family.

Its subcellular location is the nucleus. Functionally, involved in the histone deacetylase (HDAC1)-dependent transcriptional repression activity. In Gallus gallus (Chicken), this protein is Breast cancer metastasis-suppressor 1-like protein (BRMS1L).